The chain runs to 458 residues: DNA repair protein RadA (458 aa).

The C4-type zinc-finger motif lies at 11 to 28; it reads CNDCGAEFSRWQGQCSAC. An ATP-binding site is contributed by 100-107; sequence GHPGAGKS. The RadA KNRFG motif motif lies at 256 to 260; the sequence is KNRFG. Residues 355-458 form a lon-protease-like region; sequence DVFVNVVGGV…TDALAVLDNL (104 aa).

The protein belongs to the RecA family. RadA subfamily.

Its function is as follows. DNA-dependent ATPase involved in processing of recombination intermediates, plays a role in repairing DNA breaks. Stimulates the branch migration of RecA-mediated strand transfer reactions, allowing the 3' invading strand to extend heteroduplex DNA faster. Binds ssDNA in the presence of ADP but not other nucleotides, has ATPase activity that is stimulated by ssDNA and various branched DNA structures, but inhibited by SSB. Does not have RecA's homology-searching function. The polypeptide is DNA repair protein RadA (Haemophilus influenzae (strain ATCC 51907 / DSM 11121 / KW20 / Rd)).